Consider the following 283-residue polypeptide: MTPDPGLLEACWRDFVLGVVQGLTEFLPISSTAHLKVVPVLAGWGDPGLSVTAVIQLGSIVAVIAYFRADLAGVLKGISGAFRRGQWREPEARLGIAMLIGTLPILIAGLCIKLYWPGYATSSLRSVPAIAVVSIVMALLLGFAELLGPRLKQLNQVDGRDGLVVGLAQVFSLIPGVSRSGSTLTASLFDGWKRADAARFSFLLGIPAITIAGLVELKDAFSGSSAGGVLPVFVGICSAAVVSWLAIDWLIKYLESHSTRIFVVYRLLFGVLLLVWWSGSASN.

The next 6 helical transmembrane spans lie at 47-67 (PGLS…IAYF), 94-114 (LGIA…CIKL), 127-147 (VPAI…AELL), 197-217 (AARF…LVEL), 227-247 (GGVL…WLAI), and 261-281 (IFVV…SGSA).

This sequence belongs to the UppP family.

The protein resides in the cell inner membrane. The enzyme catalyses di-trans,octa-cis-undecaprenyl diphosphate + H2O = di-trans,octa-cis-undecaprenyl phosphate + phosphate + H(+). In terms of biological role, catalyzes the dephosphorylation of undecaprenyl diphosphate (UPP). Confers resistance to bacitracin. This Synechococcus sp. (strain CC9311) protein is Undecaprenyl-diphosphatase.